A 49-amino-acid polypeptide reads, in one-letter code: Large ribosomal subunit protein bL33 (49 aa).

Belongs to the bacterial ribosomal protein bL33 family.

The protein is Large ribosomal subunit protein bL33 of Caldanaerobacter subterraneus subsp. tengcongensis (strain DSM 15242 / JCM 11007 / NBRC 100824 / MB4) (Thermoanaerobacter tengcongensis).